The primary structure comprises 490 residues: Limb region 1 protein (490 aa).

Residues 1–19 lie on the Extracellular side of the membrane; that stretch reads MEGQDEVSAREQHFHSQVR. A helical transmembrane segment spans residues 20–40; it reads ESTICFLLFAILYIVSYFIII. Over 41-62 the chain is Cytoplasmic; sequence RYKRKSDEQEDEDAVVNRISLF. The chain crosses the membrane as a helical span at residues 63-83; that stretch reads LSTFTLAVSAGAVLLLPFSII. The Extracellular portion of the chain corresponds to 84 to 110; sequence SNEILLAFPHNYYIQWLNGSLIHGLWN. The helical transmembrane segment at 111 to 131 threads the bilayer; it reads LASLFSNLCLFVLMPFAFFFL. At 132 to 151 the chain is on the cytoplasmic side; it reads ESEGFAGLKKGIRARILETL. Residues 152–172 form a helical membrane-spanning segment; it reads VMLLLLALLILGMVWVASALI. The Extracellular portion of the chain corresponds to 173–187; sequence DSDAASMESLYDLWE. A helical transmembrane segment spans residues 188–208; sequence FYLPYLYSCISLMGCLLLLLC. At 209 to 291 the chain is on the cytoplasmic side; that stretch reads TPVGLSRMFT…RKKASAWERN (83 aa). Residues 256 to 287 adopt a coiled-coil conformation; the sequence is SSVEYNVMELEQELENVKILKTKLERRKKASA. A helical transmembrane segment spans residues 292–312; it reads LVYPAVMVLLLIETSISVLLV. Topologically, residues 313-339 are extracellular; that stretch reads ACNILCLLVDETAMPKGTRGPGIGSAS. Residues 340–360 traverse the membrane as a helical segment; the sequence is LSTFGFVGAALEIILIFYLMV. At 361-383 the chain is on the cytoplasmic side; that stretch reads SSVVGFYSLRFFGNFTPKKDDTT. A helical membrane pass occupies residues 384–404; the sequence is MTKIIGNCVSILVLSSALPVM. Over 405–426 the chain is Extracellular; that stretch reads SRTLGITRFDLLGDFGRFNWLG. A helical membrane pass occupies residues 427–447; that stretch reads NFYIVLSYNLLFAIMTTLCLI. Topologically, residues 448 to 490 are cytoplasmic; it reads RKFTSAVREELFKALGLHKLHLSDTSRDSETTKPSANGHQKAL.

This sequence belongs to the LIMR family.

Its subcellular location is the membrane. In terms of biological role, putative membrane receptor. In Mus musculus (Mouse), this protein is Limb region 1 protein (Lmbr1).